The sequence spans 346 residues: DNA repair protein XRCC3 (346 aa).

At methionine 1 the chain carries N-acetylmethionine. Residue 107 to 114 (GRSSAGKT) participates in ATP binding.

This sequence belongs to the RecA family. RAD51 subfamily. As to quaternary structure, interacts with RAD51C and RAD51. Part of the CX3 complex consisting of RAD51C and XRCC3; the complex has a ring-like structure arranged into a flat disk around a central channel; CX3 can interact with RAD51 in vitro. Forms a complex with FANCD2, BRCA2 and phosphorylated FANCG. Interacts with SWSAP1 and ZSWIM7; involved in homologous recombination repair. Interacts directly with PALB2 which may serve as a scaffold for a HR complex containing PALB2, BRCA2, RAD51C, RAD51 and XRCC3.

The protein localises to the nucleus. Its subcellular location is the cytoplasm. It is found in the perinuclear region. The protein resides in the mitochondrion. Its function is as follows. Involved in the homologous recombination repair (HRR) pathway of double-stranded DNA, thought to repair chromosomal fragmentation, translocations and deletions. Part of the RAD51 paralog protein complex CX3 which acts in the BRCA1-BRCA2-dependent HR pathway. Upon DNA damage, CX3 acts downstream of RAD51 recruitment; the complex binds predominantly to the intersection of the four duplex arms of the Holliday junction (HJ) and to junctions of replication forks. Involved in HJ resolution and thus in processing HR intermediates late in the DNA repair process; the function may be linked to the CX3 complex and seems to involve GEN1 during mitotic cell cycle progression. Part of a PALB2-scaffolded HR complex containing BRCA2 and RAD51C and which is thought to play a role in DNA repair by HR. Plays a role in regulating mitochondrial DNA copy number under conditions of oxidative stress in the presence of RAD51 and RAD51C. The protein is DNA repair protein XRCC3 (XRCC3) of Homo sapiens (Human).